The following is a 174-amino-acid chain: Inactive protein RESTRICTED TEV MOVEMENT 1 (174 aa).

In terms of domain architecture, Jacalin-type lectin spans 1–152; that stretch reads MKIGPVGKHD…LQYIGVYLRP (152 aa).

The protein belongs to the jacalin lectin family. In terms of assembly, self-interacts. Interacts with RTM3.

Its subcellular location is the cytoplasm. In terms of biological role, unable to mediate restriction of long-distance movement of the pathogenic tobacco etch virus (TEV) without causing a hypersensitive response or inducing systemic acquired resistance. This chain is Inactive protein RESTRICTED TEV MOVEMENT 1 (RTM1), found in Arabidopsis thaliana (Mouse-ear cress).